We begin with the raw amino-acid sequence, 1603 residues long: Gag-Pol polyprotein (1603 aa).

The segment covering 128–141 has biased composition (basic and acidic residues); sequence VGETTVQRDAKMAP. Residues 128-150 are disordered; the sequence is VGETTVQRDAKMAPEETATPKTV. Positions 172-175 match the PPXY motif motif; it reads PPPY. The LYPX(n)L motif signature appears at 180–184; the sequence is LYPSL. The segment at 181–217 is disordered; it reads YPSLAGVGEQQGQGGDTPPGAEQSRAEPGHAGQAPGP. 3 involved in capsid protein dimerization regions span residues 217–259, 290–298, and 351–362; these read PALT…KLIT, HDVTNLMRV, and GMVGNPQGQAAL. A Nuclear export signal motif is present at residues 219 to 229; that stretch reads LTDWARVREEL. 2 CCHC-type zinc fingers span residues 507-524 and 533-550; these read GLCYTCGSPGHYQAQCPK and ERCQLCNGMGHNAKQCRK. The short motif at 524 to 527 is the Nuclear/nucleolar localization signal element; sequence KKRK. The segment at 543–575 is disordered; sequence HNAKQCRKRDGNQGQRPGKGLSSGPWPGPEPPA. The Peptidase A2 domain maps to 609 to 690; sequence ITALLDSGAD…VRGSILGRDC (82 aa). Residue aspartate 614 is the For protease activity; shared with dimeric partner of the active site. The Reverse transcriptase domain maps to 750–938; it reads LQLGHIEPSL…PGVQYLGYKL (189 aa). Mg(2+)-binding residues include aspartate 815, aspartate 890, aspartate 891, aspartate 1158, glutamate 1192, aspartate 1213, and aspartate 1272. The region spanning 1149–1280 is the RNase H type-1 domain; it reads PVPGPTVFTD…ADSQATFQAY (132 aa). The Integrase-type zinc-finger motif lies at 1280–1321; it reads YPLREAKDLHTALHIGPRALSKACNISMQQAREVVQTCPHCN. The Zn(2+) site is built by histidine 1289, histidine 1293, cysteine 1317, and cysteine 1320. The region spanning 1333-1496 is the Integrase catalytic domain; it reads RGLGPLQIWQ…TPIQKHWRPT (164 aa). Mg(2+)-binding residues include aspartate 1344, aspartate 1401, and glutamate 1437. The segment at residues 1502–1550 is a DNA-binding region (integrase-type); sequence PPVKIRIETGEWEKGWNVLVWGRGYAAVKNRDTDKVIWVPSRKVKPDIT. Residues 1548–1567 are involved in homooctamerization; it reads DITQKDEVTKKDEASPLFAG. The tract at residues 1569-1603 is disordered; the sequence is SDWIPWEDEQEGLQGETASNKQERPGEDTLAANES.

Active as a homodimer. As to quaternary structure, homodimer. Homomultimer. Homohexamer. In terms of assembly, homodimer; further associates as a homooctamer. Heterodimer of alpha and beta subunits. Three forms of RT exist: alpha-alpha (alpha-Pol), beta-beta (beta-Pol), and alpha-beta, with the major form being the heterodimer. Both the polymerase and RNase H active sites are located in the alpha subunit of heterodimeric RT alpha-beta. Mg(2+) serves as cofactor. The cofactor is Mn(2+). In terms of processing, specific enzymatic cleavages in vivo yield mature proteins. Post-translationally, capsid protein p27: The cleavage at the C-terminus is slowly trimmed by the viral protease, sometimes being cut internally thereby generating the short version of the capsid protein and a capsid protein C-terminally extended by 3 amino acids in a ratio of 2:1.

It localises to the virion. The catalysed reaction is DNA(n) + a 2'-deoxyribonucleoside 5'-triphosphate = DNA(n+1) + diphosphate. It carries out the reaction Endonucleolytic cleavage to 5'-phosphomonoester.. Capsid protein p27: Self-associates to form the irregular polyhedron core composed of hexamers and pentamers, that encapsulates the genomic RNA-nucleocapsid complex. Assembles as a tube in vitro. Binds to inositol hexakisphosphate (IP6), which allows the assembly of the polyhedral capsid. In terms of biological role, plays a role in the oligomerization of the Gag polyprotein and in the stabilization of the immature particle. Essential layering element during tube assembly. Allows the cooperative binging of Gag to the host plasma membrane. Its function is as follows. Binds strongly to viral nucleic acids and promotes their packaging. Plays a role in the maturation-stabilization of the viral dimeric RNA via highly structured zinc-binding motifs. Functionally, the aspartyl protease mediates proteolytic cleavages of Gag and Gag-Pol polyproteins during or shortly after the release of the virion from the plasma membrane. Cleavages take place as an ordered, step-wise cascade to yield mature proteins. This process is called maturation. Displays maximal activity during the budding process just prior to particle release from the cell. Catalyzes viral DNA integration into the host chromosome, by performing a series of DNA cutting and joining reactions. This recombination event is an essential step in the viral replication cycle. Has a strong preference for using the 3'-OH at the viral DNA end as a nucleophile. The protein is Gag-Pol polyprotein (gag-pol) of Gallus gallus (Chicken).